The primary structure comprises 786 residues: LPS-assembly protein LptD (786 aa).

The signal sequence occupies residues 1–24; it reads MSFTSRSLLASFTGCLLYGTPAIA.

Belongs to the LptD family. Component of the lipopolysaccharide transport and assembly complex. Interacts with LptE and LptA.

It is found in the cell outer membrane. In terms of biological role, together with LptE, is involved in the assembly of lipopolysaccharide (LPS) at the surface of the outer membrane. The chain is LPS-assembly protein LptD from Aliivibrio fischeri (strain ATCC 700601 / ES114) (Vibrio fischeri).